The chain runs to 892 residues: Microsomal triglyceride transfer protein homolog (892 aa).

Residues 1–19 (MFSSRIWLLLAVTVGVCLA) form the signal peptide.

As to quaternary structure, heterodimer; heterodimerizes with protein disulfide isomerase.

It is found in the endoplasmic reticulum. Functionally, catalyzes the transport of cholesteryl ester, and phospholipid between phospholipid surfaces. Does not catalyze transport of triglycerides. Required for the assembly and secretion of plasma lipoproteins that contain apolipoprotein B. Required for normal expression of klf-3. This chain is Microsomal triglyceride transfer protein homolog, found in Caenorhabditis elegans.